A 56-amino-acid polypeptide reads, in one-letter code: uncharacterized protein (56 aa).

This is an uncharacterized protein from Acidianus convivator (ABV).